The sequence spans 227 residues: Ion-translocating oxidoreductase complex subunit E (227 aa).

6 consecutive transmembrane segments (helical) span residues 18–38 (ALVQLLGLCPLLAVSATVTNA), 39–59 (LGLGIATILVLVGSNLIVSLV), 69–89 (IPVFVMIIASLVTCVQLLMNA), 93–113 (GLYLSLGIFIPLIVTNCIIIG), 125–145 (LPAVLDGLWMGMGMTAVLVLL), and 182–202 (HFLLAMLPPGAFLGVGFLIAL).

It belongs to the NqrDE/RnfAE family. In terms of assembly, the complex is composed of six subunits: RnfA, RnfB, RnfC, RnfD, RnfE and RnfG.

The protein localises to the cell inner membrane. In terms of biological role, part of a membrane-bound complex that couples electron transfer with translocation of ions across the membrane. This Aliivibrio fischeri (strain ATCC 700601 / ES114) (Vibrio fischeri) protein is Ion-translocating oxidoreductase complex subunit E.